Here is a 310-residue protein sequence, read N- to C-terminus: Zinc transporter ZIP9 (310 aa).

8 helical membrane-spanning segments follow: residues 7–27 (ISLLSVAMLVGCYVAGTIPLA), 35–55 (LKLITVLGAGLLCGTALAVII), 108–128 (ACIGVSLVLGFVFMLLVDQIG), 148–168 (ITTTLGLVVHAAADGVALGAA), 178–198 (LIVFVAIMLHKAPAAFGLVSF), 212–232 (HLLVFALAAPVLAMLTFLGLS), 246–266 (GVAMLFSAGTFLYVATVHVLP), and 289–309 (VEVVALVLGCLIPLVLSVGHH).

This sequence belongs to the ZIP transporter (TC 2.A.5) family. Expressed in brain, liver, ovary, and testis.

It is found in the golgi apparatus. The protein localises to the trans-Golgi network membrane. Its subcellular location is the cell membrane. It localises to the cytoplasm. The protein resides in the perinuclear region. It is found in the mitochondrion. The protein localises to the nucleus. The catalysed reaction is Zn(2+)(in) = Zn(2+)(out). In terms of biological role, has dual functions as a membrane-bound androgen receptor and as an androgen-dependent zinc transporter both of which are mediated through G protein activation and are required for the androgen-dependent apoptotic response. Upon androgen binding, mediates apoptosis by directly activating a stimulatory G protein that leads to increased cAMP levels and MAP kinase activity and which is accompanied by increased intracellular free zinc levels. This Micropogonias undulatus (Atlantic croaker) protein is Zinc transporter ZIP9.